Consider the following 265-residue polypeptide: 3-methyl-2-oxobutanoate hydroxymethyltransferase (265 aa).

Mg(2+) contacts are provided by Asp-44 and Asp-83. Residues 44 to 45 (DS), Asp-83, and Lys-113 contribute to the 3-methyl-2-oxobutanoate site. Glu-115 is a binding site for Mg(2+). The active-site Proton acceptor is Glu-183.

Belongs to the PanB family. As to quaternary structure, homodecamer; pentamer of dimers. Mg(2+) is required as a cofactor.

It is found in the cytoplasm. The enzyme catalyses 3-methyl-2-oxobutanoate + (6R)-5,10-methylene-5,6,7,8-tetrahydrofolate + H2O = 2-dehydropantoate + (6S)-5,6,7,8-tetrahydrofolate. The protein operates within cofactor biosynthesis; (R)-pantothenate biosynthesis; (R)-pantoate from 3-methyl-2-oxobutanoate: step 1/2. Its function is as follows. Catalyzes the reversible reaction in which hydroxymethyl group from 5,10-methylenetetrahydrofolate is transferred onto alpha-ketoisovalerate to form ketopantoate. The sequence is that of 3-methyl-2-oxobutanoate hydroxymethyltransferase from Leptospira borgpetersenii serovar Hardjo-bovis (strain L550).